We begin with the raw amino-acid sequence, 68 residues long: U-actitoxin-Avt1 (68 aa).

The N-terminal stretch at 1-22 is a signal peptide; sequence MNSKAIISVFLIMLVVVSCTQA. A propeptide spanning residues 23-40 is cleaved from the precursor; the sequence is TYETEDDDEPGPRHSEKR. A disordered region spans residues 24 to 50; that stretch reads YETEDDDEPGPRHSEKRSCARGCGGDS. The span at 32–41 shows a compositional bias: basic and acidic residues; the sequence is PGPRHSEKRS. Cystine bridges form between cysteine 42–cysteine 54, cysteine 46–cysteine 59, and cysteine 52–cysteine 66.

Stable protein with probable toxin activity. Does not show activity on all channels tested. Shows no hemolytic activity on rat erythrocytes. This Aulactinia veratra (Green snakelock anemone) protein is U-actitoxin-Avt1.